Reading from the N-terminus, the 190-residue chain is CDP-diacylglycerol--glycerol-3-phosphate 3-phosphatidyltransferase (190 aa).

Residues 6 to 17 (GVFNIPMYLTLF) are Cytoplasmic-facing. A helical membrane pass occupies residues 18 to 42 (RIIMVPCFVAVFYWPIYWSPMLCTL). The Periplasmic segment spans residues 43–65 (IFFIAAITDWFDGFLARRWNQTS). The chain crosses the membrane as a helical span at residues 66–86 (RIGGFLDPIADKIMIITALIL). Topologically, residues 87 to 91 (ISEHF) are cytoplasmic. Residues 92-112 (HVWWMTLPISSIIIREILISS) traverse the membrane as a helical segment. At 113-150 (LRECIARVDNKNNISVIWLSKVKTFAQMLALIALLCRL) the chain is on the periplasmic side. Residues 151-173 (NEWTVIMGVISLYTAMLLTLWSM) form a helical membrane-spanning segment. Over 174–186 (CYYVYSVSSILLQ) the chain is Cytoplasmic.

It belongs to the CDP-alcohol phosphatidyltransferase class-I family.

The protein resides in the cell inner membrane. The enzyme catalyses a CDP-1,2-diacyl-sn-glycerol + sn-glycerol 3-phosphate = a 1,2-diacyl-sn-glycero-3-phospho-(1'-sn-glycero-3'-phosphate) + CMP + H(+). Its pathway is phospholipid metabolism; phosphatidylglycerol biosynthesis; phosphatidylglycerol from CDP-diacylglycerol: step 1/2. Its function is as follows. Catalyzes the conversion of cytidine diphosphate diacylglycerol (CDP-DG) and glycerol 3-phosphate into phosphatidylglycerol. Essential for the synthesis of anionic phospholipids, thereby playing a role in balancing the ratio of zwitterionic and anionic phospholipids, which is thought to be important for normal membrane function. The protein is CDP-diacylglycerol--glycerol-3-phosphate 3-phosphatidyltransferase of Blochmanniella floridana.